We begin with the raw amino-acid sequence, 248 residues long: DNA-directed RNA polymerase subunit Rpo3 (248 aa).

It belongs to the archaeal Rpo3/eukaryotic RPB3 RNA polymerase subunit family. As to quaternary structure, part of the RNA polymerase complex.

It localises to the cytoplasm. The enzyme catalyses RNA(n) + a ribonucleoside 5'-triphosphate = RNA(n+1) + diphosphate. Its function is as follows. DNA-dependent RNA polymerase (RNAP) catalyzes the transcription of DNA into RNA using the four ribonucleoside triphosphates as substrates. The protein is DNA-directed RNA polymerase subunit Rpo3 of Halobacterium salinarum (strain ATCC 29341 / DSM 671 / R1).